Here is a 20-residue protein sequence, read N- to C-terminus: Phospholipase A2 II-5b (20 aa).

It belongs to the phospholipase A2 family. Group I subfamily. Requires Ca(2+) as cofactor. In terms of tissue distribution, expressed by the venom gland.

The protein resides in the secreted. It catalyses the reaction a 1,2-diacyl-sn-glycero-3-phosphocholine + H2O = a 1-acyl-sn-glycero-3-phosphocholine + a fatty acid + H(+). In terms of biological role, snake venom phospholipase A2 (PLA2) that exhibits weak enzymatic activity. PLA2 catalyzes the calcium-dependent hydrolysis of the 2-acyl groups in 3-sn-phosphoglycerides. This is Phospholipase A2 II-5b from Notechis scutatus scutatus (Mainland tiger snake).